The following is a 647-amino-acid chain: Dihydrolipoyllysine-residue acetyltransferase component of pyruvate dehydrogenase complex (647 aa).

Residues 1–86 (MWRVCARRAQ…LWGSPSRRWY (86 aa)) constitute a mitochondrion transit peptide. Residues 91–167 (HQKVPLPSLS…PVGAIICITV (77 aa)) form the Lipoyl-binding 1 domain. Ser100 is modified (phosphoserine). Lys132 bears the N6-lipoyllysine mark. Positions 184–216 (SAAPAPPAAPAPTPAAPAPSPTPSAQAPGSSYP) are disordered. The span at 187-205 (PAPPAAPAPTPAAPAPSPT) shows a compositional bias: pro residues. Residues 218–294 (HMQVLLPALS…PLGTPLCIIV (77 aa)) enclose the Lipoyl-binding 2 domain. N6-lipoyllysine is present on Lys259. Residues 311 to 352 (VTDLKPPAPPPIPSPAAPVPPAPQPVAPPPSAPRPAAPAGPK) form a disordered region. A compositionally biased stretch (pro residues) spans 316-348 (PPAPPPIPSPAAPVPPAPQPVAPPPSAPRPAAP). One can recognise a Peripheral subunit-binding (PSBD) domain in the interval 356-393 (FVSPLAKKLAAEKGIDLTQVKGTGPDGRIIKKDIDSFV). Residue Arg461 coordinates CoA. Lys466 is modified (N6-acetyllysine). At Lys473 the chain carries N6-succinyllysine. Ser475 is a CoA binding site. Lys547 carries the N6-succinyllysine modification. Ser566, Asn567, and Gly591 together coordinate CoA. Residues His620 and Asp624 contribute to the active site.

The protein belongs to the 2-oxoacid dehydrogenase family. As to quaternary structure, part of the pyruvate dehydrogenase complex (PDHc) that is a multi-enzyme complex composed of multiple copies of three enzymes, pyruvate dehydrogenase (subunits PDH1A and PDHB, E1 component), dihydrolipoamide acetyltransferase (DLAT, E2 component), and dihydrolipoamide dehydrogenase (DLD, E3 component) to which is added an additional protein the E3-binding protein (PDHX, E3BP). In terms of structural architecture, the E2 and E3BP components assemble into a 60meric central core with icosahedral symmetry. The central core is decorated with E1 and E3 proteins. Currently, two alternative models for the E2:E3BP stoichiometry are considered as being either 48:12 (E2(48)-E3BP(12)) or 40:20 (E2(40)-E3BP(20)). Interacts with PDK2 and PDK3. Interacts with SIRT4. Interacts with PDHB. It depends on (R)-lipoate as a cofactor. Delipoylated at Lys-132 and Lys-259 by SIRT4, delipoylation decreases the PHD complex activity.

The protein localises to the mitochondrion matrix. The enzyme catalyses N(6)-[(R)-dihydrolipoyl]-L-lysyl-[protein] + acetyl-CoA = N(6)-[(R)-S(8)-acetyldihydrolipoyl]-L-lysyl-[protein] + CoA. Its function is as follows. As part of the pyruvate dehydrogenase complex, catalyzes the transfers of an acetyl group to a lipoic acid moiety. The pyruvate dehydrogenase complex, catalyzes the overall conversion of pyruvate to acetyl-CoA and CO(2), and thereby links cytoplasmic glycolysis and the mitochondrial tricarboxylic acid (TCA) cycle. The polypeptide is Dihydrolipoyllysine-residue acetyltransferase component of pyruvate dehydrogenase complex (Bos taurus (Bovine)).